We begin with the raw amino-acid sequence, 144 residues long: 6,7-dimethyl-8-ribityllumazine synthase (144 aa).

5-amino-6-(D-ribitylamino)uracil contacts are provided by residues F21, 56-58, and 80-82; these read AYE and AVI. Residue 85–86 participates in (2S)-2-hydroxy-3-oxobutyl phosphate binding; it reads GT. Residue H88 is the Proton donor of the active site. F113 is a 5-amino-6-(D-ribitylamino)uracil binding site. Position 127 (R127) interacts with (2S)-2-hydroxy-3-oxobutyl phosphate.

The protein belongs to the DMRL synthase family. Forms an icosahedral capsid composed of 60 subunits, arranged as a dodecamer of pentamers.

It catalyses the reaction (2S)-2-hydroxy-3-oxobutyl phosphate + 5-amino-6-(D-ribitylamino)uracil = 6,7-dimethyl-8-(1-D-ribityl)lumazine + phosphate + 2 H2O + H(+). It participates in cofactor biosynthesis; riboflavin biosynthesis; riboflavin from 2-hydroxy-3-oxobutyl phosphate and 5-amino-6-(D-ribitylamino)uracil: step 1/2. Its function is as follows. Catalyzes the formation of 6,7-dimethyl-8-ribityllumazine by condensation of 5-amino-6-(D-ribitylamino)uracil with 3,4-dihydroxy-2-butanone 4-phosphate. This is the penultimate step in the biosynthesis of riboflavin. This is 6,7-dimethyl-8-ribityllumazine synthase (ribH) from Photobacterium leiognathi.